The primary structure comprises 387 residues: Oxidase FUB9 (387 aa).

Residues 1-20 are disordered; sequence MSRTNLPIQPAKMSDATSSK. The FMN hydroxy acid dehydrogenase domain occupies 18–379; the sequence is SSKPQIFSIQ…TPAHLSILNA (362 aa). Tyr44 is a binding site for a 2-oxocarboxylate. FMN is bound by residues Ser126, Gln150, and Thr178. Arg187 is an a 2-oxocarboxylate binding site. Lys250 lines the FMN pocket. His274 functions as the Proton acceptor in the catalytic mechanism. Arg277 provides a ligand contact to a 2-oxocarboxylate. Residues 305–309 and 328–329 each bind FMN; these read DGGFR and GR.

The protein belongs to the FMN-dependent alpha-hydroxy acid dehydrogenase family. FMN serves as cofactor.

It participates in mycotoxin biosynthesis. Its function is as follows. Oxidase; part of the gene cluster that mediates the biosynthesis of fusaric acid, a mycotoxin with low to moderate toxicity to animals and humans, but with high phytotoxic properties. L-aspartate is suggested as fusaric acid amino acid precursor that is activated and further processed to O-acetyl-L-homoserine by cluster enzymes aspartate kinase FUB3 and homoserine O-acetyltransferase FUB5, as well as enzymes of the primary metabolism. The polyketide synthase (PKS) FUB1 generates the triketide trans-2-hexenal which is presumptively released by the hydrolase FUB4 and linked to the NRPS-bound amino acid precursor by NAD(P)-dependent dehydrogenase FUB6. FUB1, FUB4, and the non-canonical NRPS Fub8 may form an enzyme complex. Further processing of the NRPS-bound intermediate might be carried out by FUB6 and the sulfhydrylase FUB7, enabling a spontaneous electrocyclization to close the carbon backbone of fusaric acid. Dihydrofusaric acid is likely to be released via reduction by the thioester reductase (TR) domain of FUB8 whereupon the final oxidation to fusaric acid may (also) be performed by the FMN-dependent dehydrogenase FUB9. The protein is Oxidase FUB9 of Fusarium oxysporum f. sp. lycopersici (strain 4287 / CBS 123668 / FGSC 9935 / NRRL 34936) (Fusarium vascular wilt of tomato).